The sequence spans 140 residues: Methylglyoxal synthase (140 aa).

The 140-residue stretch at 1 to 140 (MKIALIAHDR…HDQDSNPINL (140 aa)) folds into the MGS-like domain. Residues H8, K12, 34 to 37 (TGTT), and 54 to 55 (SG) contribute to the substrate site. The active-site Proton donor/acceptor is D60. Position 87 (H87) interacts with substrate.

The protein belongs to the methylglyoxal synthase family.

It catalyses the reaction dihydroxyacetone phosphate = methylglyoxal + phosphate. Functionally, catalyzes the formation of methylglyoxal from dihydroxyacetone phosphate. The sequence is that of Methylglyoxal synthase from Latilactobacillus sakei subsp. sakei (strain 23K) (Lactobacillus sakei subsp. sakei).